A 480-amino-acid chain; its full sequence is 2-succinylbenzoate--CoA ligase (480 aa).

The protein belongs to the ATP-dependent AMP-binding enzyme family. MenE subfamily.

It carries out the reaction 2-succinylbenzoate + ATP + CoA = 2-succinylbenzoyl-CoA + AMP + diphosphate. It participates in quinol/quinone metabolism; 1,4-dihydroxy-2-naphthoate biosynthesis; 1,4-dihydroxy-2-naphthoate from chorismate: step 5/7. It functions in the pathway quinol/quinone metabolism; menaquinone biosynthesis. In terms of biological role, converts 2-succinylbenzoate (OSB) to 2-succinylbenzoyl-CoA (OSB-CoA). This chain is 2-succinylbenzoate--CoA ligase, found in Oceanobacillus iheyensis (strain DSM 14371 / CIP 107618 / JCM 11309 / KCTC 3954 / HTE831).